A 129-amino-acid chain; its full sequence is MFRQCAKRYASSLPPNALKPAFGPPDKVAAQKFKESLMATEKHAKDTSNMWVKISVWVALPAIALTAVNTYFVEKEHAEHREHLKHVPDSEWPRDYEFMNIRSKPFFWGDGDKTLFWNPVVNRHIEHDD.

A mitochondrion-targeting transit peptide spans 1–9 (MFRQCAKRY). Over 10 to 43 (ASSLPPNALKPAFGPPDKVAAQKFKESLMATEKH) the chain is Mitochondrial matrix. A helical transmembrane segment spans residues 44–71 (AKDTSNMWVKISVWVALPAIALTAVNTY). At 72-129 (FVEKEHAEHREHLKHVPDSEWPRDYEFMNIRSKPFFWGDGDKTLFWNPVVNRHIEHDD) the chain is on the mitochondrial intermembrane side.

Belongs to the cytochrome c oxidase subunit 6A family. Component of the cytochrome c oxidase (complex IV, CIV), a multisubunit enzyme composed of 12 subunits. The complex is composed of a catalytic core of 3 subunits COX1, COX2 and COX3, encoded in the mitochondrial DNA, and 9 supernumerary subunits COX4, COX5A (or COX5B), COX6, COX7, COX8, COX9, COX12, COX13 and COX26, which are encoded in the nuclear genome. The complex exists as a monomer or a dimer and forms supercomplexes (SCs) in the inner mitochondrial membrane with a dimer of ubiquinol-cytochrome c oxidoreductase (cytochrome b-c1 complex, complex III, CIII), resulting in 2 different assemblies (supercomplexes III(2)IV and III(2)IV(2)). COX13 interacts with COX1 and COX3 on the intermembrane space (IMS) and COX4 on the matrix side.

The protein localises to the mitochondrion inner membrane. It functions in the pathway energy metabolism; oxidative phosphorylation. Its function is as follows. Component of the cytochrome c oxidase, the last enzyme in the mitochondrial electron transport chain which drives oxidative phosphorylation. The respiratory chain contains 3 multisubunit complexes succinate dehydrogenase (complex II, CII), ubiquinol-cytochrome c oxidoreductase (cytochrome b-c1 complex, complex III, CIII) and cytochrome c oxidase (complex IV, CIV), that cooperate to transfer electrons derived from NADH and succinate to molecular oxygen, creating an electrochemical gradient over the inner membrane that drives transmembrane transport and the ATP synthase. Cytochrome c oxidase is the component of the respiratory chain that catalyzes the reduction of oxygen to water. Electrons originating from reduced cytochrome c in the intermembrane space (IMS) are transferred via the dinuclear copper A center (CU(A)) of COX2 and heme A of COX1 to the active site in COX1, a binuclear center (BNC) formed by heme A3 and copper B (CU(B)). The BNC reduces molecular oxygen to 2 water molecules using 4 electrons from cytochrome c in the IMS and 4 protons from the mitochondrial matrix. The sequence is that of Cytochrome c oxidase subunit 13, mitochondrial (COX13) from Saccharomyces cerevisiae (strain ATCC 204508 / S288c) (Baker's yeast).